The sequence spans 89 residues: Small ribosomal subunit protein bS20 (89 aa).

Positions Met1–Met28 are disordered.

The protein belongs to the bacterial ribosomal protein bS20 family.

Binds directly to 16S ribosomal RNA. The sequence is that of Small ribosomal subunit protein bS20 from Koribacter versatilis (strain Ellin345).